The primary structure comprises 185 residues: ATP-dependent protease subunit HslV (185 aa).

The active site involves threonine 12. Positions 168, 171, and 174 each coordinate Na(+).

It belongs to the peptidase T1B family. HslV subfamily. A double ring-shaped homohexamer of HslV is capped on each side by a ring-shaped HslU homohexamer. The assembly of the HslU/HslV complex is dependent on binding of ATP.

The protein localises to the cytoplasm. It catalyses the reaction ATP-dependent cleavage of peptide bonds with broad specificity.. Its activity is regulated as follows. Allosterically activated by HslU binding. Protease subunit of a proteasome-like degradation complex believed to be a general protein degrading machinery. The polypeptide is ATP-dependent protease subunit HslV (Cereibacter sphaeroides (strain ATCC 17023 / DSM 158 / JCM 6121 / CCUG 31486 / LMG 2827 / NBRC 12203 / NCIMB 8253 / ATH 2.4.1.) (Rhodobacter sphaeroides)).